Here is a 555-residue protein sequence, read N- to C-terminus: Probable apyrase 6 (555 aa).

The segment covering 1-10 (MRRSHARSRV) has biased composition (basic residues). The disordered stretch occupies residues 1 to 45 (MRRSHARSRVKNSSSSKSDMDPIKFQIRSGNRAPSSSSTYTLTKP). At 1-55 (MRRSHARSRVKNSSSSKSDMDPIKFQIRSGNRAPSSSSTYTLTKPNSKHAKSNLL) the chain is on the cytoplasmic side. Residues 28–45 (RSGNRAPSSSSTYTLTKP) show a composition bias toward polar residues. A helical membrane pass occupies residues 56–76 (LTVGSISVVLGVLFLCYSILF). Residues 77–512 (SGGNLRGSLR…HALFSNHPKT (436 aa)) are Extracellular-facing. Residue 89–99 (VVIDGGSTGTR) coordinates ATP. The active-site Proton acceptor is the Glu212. 236–246 (GIVELGGASAQ) is a binding site for ATP. 2 N-linked (GlcNAc...) asparagine glycosylation sites follow: Asn267 and Asn348. A helical transmembrane segment spans residues 513 to 533 (LHYLIGIPILMTVLVYLVTKW). The Cytoplasmic segment spans residues 534–555 (RKPQLKTIYDLEKGRYIVTRIR).

This sequence belongs to the GDA1/CD39 NTPase family. Requires Ca(2+) as cofactor. Detected in mature pollen grains (at the protein level). Also expressed in the veins and hydathode regions of rosette leaves.

It is found in the cytoplasmic vesicle membrane. The enzyme catalyses a ribonucleoside 5'-triphosphate + 2 H2O = a ribonucleoside 5'-phosphate + 2 phosphate + 2 H(+). In terms of biological role, catalyzes the hydrolysis of phosphoanhydride bonds of nucleoside tri- and di-phosphates. Involved in the regulation of pollen and anther development. This chain is Probable apyrase 6 (APY6), found in Arabidopsis thaliana (Mouse-ear cress).